We begin with the raw amino-acid sequence, 286 residues long: N-alpha-acetyltransferase 80 (286 aa).

Residues 33-54 (TFNPGPTELTLDPEHQPEETPA) are disordered. An N-acetyltransferase domain is found at 60-207 (LTLEPVHRRP…VFTSRRLPAT (148 aa)). Residues Arg85 and 90–93 (RLHS) each bind substrate. Residues 141–143 (VVV), 149–154 (GRGFGR), and Gln179 each bind acetyl-CoA. Residues 212-269 (FPTAPSPRPPRKAPNLTAQAAPRGPKGPPLPPPPPLPECLTISPPVPSGPPSKSLLET) form a disordered region. The span at 236-248 (PKGPPLPPPPPLP) shows a compositional bias: pro residues.

This sequence belongs to the acetyltransferase family. Strongly expressed in heart and skeletal muscle, followed by brain and pancreas, with weak expression in kidney, liver, and lung and no expression in placenta.

The protein resides in the cytoplasm. It localises to the cytosol. It catalyses the reaction N-terminal L-aspartyl-L-aspartyl-L-aspartyl-[protein] + acetyl-CoA = N-terminal N-acetyl-L-aspartyl-L-aspartyl-L-aspartyl-[protein] + CoA + H(+). It carries out the reaction N-terminal L-glutamyl-L-glutamyl-L-glutamyl-[protein] + acetyl-CoA = N-terminal N-acetyl-L-glutamyl-L-glutamyl-L-glutamyl-[protein] + CoA + H(+). Functionally, N-alpha-acetyltransferase that specifically mediates the acetylation of the acidic amino terminus of processed forms of beta- and gamma-actin (ACTB and ACTG, respectively). N-terminal acetylation of processed beta- and gamma-actin regulates actin filament depolymerization and elongation. In vivo, preferentially displays N-terminal acetyltransferase activity towards acid N-terminal sequences starting with Asp-Asp-Asp and Glu-Glu-Glu. In vitro, shows high activity towards Met-Asp-Glu-Leu and Met-Asp-Asp-Asp. May act as a tumor suppressor. This chain is N-alpha-acetyltransferase 80, found in Homo sapiens (Human).